The primary structure comprises 598 residues: MASLRRVKVLLVLNLIAVAGFVLFLAKCRPIAVRSGDAFHEIRPRAEVANLSAHSASPIQDAVLKRLSLLEDIVYRQLNGLSKSLGLIEGYGGRGKGGLPATLSPAEEEKAKGPHEKYGYNSYLSEKISLDRSIPDYRPTKCKELKYSKDLPQISIIFIFVNEALSVILRSVHSAVNHTPTHLLKEIILVDDNSDEEELKVPLEEYVHKRYPGLVKVVRNQKREGLIRARIEGWKVATGQVTGFFDAHVEFTAGWAEPVLSRIQENRKRVILPSIDNIKQDNFEVQRYENSAHGYSWELWCMYISPPKDWWDAGDPSLPIRTPAMIGCSFVVNRKFFGEIGLLDPGMDVYGGENIELGIKVWLCGGSMEVLPCSRVAHIERKKKPYNSNIGFYTKRNALRVAEVWMDDYKSHVYIAWNLPLENPGIDIGDVSERRALRKSLKCKNFQWYLDHVYPEMRRYNNTVAYGELRNNKAKDVCLDQGPLENHTAILYPCHGWGPQLARYTKEGFLHLGALGTTTLLPDTRCLVDNSKSRLPQLLDCDKVKSSLYKRWNFIQNGAIMNKGTGRCLEVENRGLAGIDLILRSCTGQRWTIKNSIK.

Residues 1 to 6 (MASLRR) lie on the Cytoplasmic side of the membrane. Residues 7 to 27 (VKVLLVLNLIAVAGFVLFLAK) form a helical; Signal-anchor for type II membrane protein membrane-spanning segment. Over 28–598 (CRPIAVRSGD…QRWTIKNSIK (571 aa)) the chain is Lumenal. Residue Asn50 is glycosylated (N-linked (GlcNAc...) asparagine). Disulfide bonds link Cys142–Cys373 and Cys364–Cys443. A catalytic subdomain A region spans residues 151–262 (LPQISIIFIF…AGWAEPVLSR (112 aa)). Asp192 and Arg223 together coordinate substrate. The Mn(2+) site is built by Asp246, His248, and His378. A catalytic subdomain B region spans residues 319-381 (PIRTPAMIGC…PCSRVAHIER (63 aa)). Residues Arg381 and Tyr386 each contribute to the substrate site. Asn461 and Asn486 each carry an N-linked (GlcNAc...) asparagine glycan. One can recognise a Ricin B-type lectin domain in the interval 465 to 594 (AYGELRNNKA…SCTGQRWTIK (130 aa)). Intrachain disulfides connect Cys478–Cys494, Cys526–Cys541, and Cys568–Cys586.

It belongs to the glycosyltransferase 2 family. GalNAc-T subfamily. Requires Mn(2+) as cofactor. In terms of tissue distribution, highly expressed in brain and heart. Weakly expressed in kidney, liver, lung and spleen.

Its subcellular location is the golgi apparatus membrane. It carries out the reaction L-seryl-[protein] + UDP-N-acetyl-alpha-D-galactosamine = a 3-O-[N-acetyl-alpha-D-galactosaminyl]-L-seryl-[protein] + UDP + H(+). The enzyme catalyses L-threonyl-[protein] + UDP-N-acetyl-alpha-D-galactosamine = a 3-O-[N-acetyl-alpha-D-galactosaminyl]-L-threonyl-[protein] + UDP + H(+). It functions in the pathway protein modification; protein glycosylation. Its function is as follows. May catalyze the initial reaction in O-linked oligosaccharide biosynthesis, the transfer of an N-acetyl-D-galactosamine residue to a serine or threonine residue on the protein receptor. The sequence is that of Polypeptide N-acetylgalactosaminyltransferase 17 from Homo sapiens (Human).